The following is a 324-amino-acid chain: MHFLVALVLLGQIIGSTLSSQVRGDLECNDREAKEWADQAVRYINEHKLHEYKQALNVIKNIVVVPWNGDLVAVFLKLNLLETECHVLDPTPVEKCTIRPQQNHAVEMDCDAKIMFDVETFKQDVFVKCHSTPDSVEDVRRNCLKCPILLSPSDPHVVDSVEYVLNKHNEQLSGHVYEVLEISRGQHKYEPEAFYVEFAIVEVNCTAQEAHDDHHHCHPNTAGEDHIAFCKATVFRSHASLEKPKHENFESDCVILDVKEGHAHSHLIEHHIGKYSTSPGQNSTVECVAECPVAFVNKEVPTDISDRHTTPVKGCPGKILHFQL.

The signal sequence occupies residues 1–19 (MHFLVALVLLGQIIGSTLS). Cystatin fetuin-A-type domains follow at residues 22–130 (VRGD…VKCH) and 141–254 (RNCL…SDCV). The Cell attachment site motif lies at 23–25 (RGD). Intrachain disulfides connect cysteine 28–cysteine 315, cysteine 85–cysteine 96, cysteine 110–cysteine 129, cysteine 143–cysteine 146, cysteine 205–cysteine 217, cysteine 230–cysteine 253, and cysteine 287–cysteine 291. Residue asparagine 204 is glycosylated (N-linked (GlcNAc...) asparagine). Asparagine 282 carries N-linked (GlcNAc...) asparagine glycosylation.

Homodimer. Expressed by the liver.

It localises to the secreted. Suppress hemorrhage induced by metalloproteinases from the same venom (brevilysin-H3, -H4, -H6) and from habu venom (metalloproteinases HR1A and HR1B). The non-hemorrhagic brevilysin-L4 is not inhibited by cMSF. Does not inhibit serine and cysteine proteases such as trypsin, chymotrypsin, thermolysin, and papain. The inhibition may occur by formation of a non-covalent complex between this protein and the proteinases at their metalloproteinase domains. The sequence is that of Antihemorrhagic factor cMSF from Gloydius brevicauda (Korean slamosa snake).